A 29-amino-acid chain; its full sequence is L-serine dehydratase, beta chain (29 aa).

Belongs to the iron-sulfur dependent L-serine dehydratase family. As to quaternary structure, heterodimer of an alpha chain and a beta chain. [4Fe-4S] cluster is required as a cofactor.

It carries out the reaction L-serine = pyruvate + NH4(+). It functions in the pathway carbohydrate biosynthesis; gluconeogenesis. This Anaerotignum propionicum (Clostridium propionicum) protein is L-serine dehydratase, beta chain.